The chain runs to 149 residues: D-aminoacyl-tRNA deacylase (149 aa).

The Gly-cisPro motif, important for rejection of L-amino acids motif lies at 137 to 138 (GP).

It belongs to the DTD family. Homodimer.

The protein localises to the cytoplasm. It carries out the reaction glycyl-tRNA(Ala) + H2O = tRNA(Ala) + glycine + H(+). It catalyses the reaction a D-aminoacyl-tRNA + H2O = a tRNA + a D-alpha-amino acid + H(+). Its function is as follows. An aminoacyl-tRNA editing enzyme that deacylates mischarged D-aminoacyl-tRNAs. Also deacylates mischarged glycyl-tRNA(Ala), protecting cells against glycine mischarging by AlaRS. Acts via tRNA-based rather than protein-based catalysis; rejects L-amino acids rather than detecting D-amino acids in the active site. By recycling D-aminoacyl-tRNA to D-amino acids and free tRNA molecules, this enzyme counteracts the toxicity associated with the formation of D-aminoacyl-tRNA entities in vivo and helps enforce protein L-homochirality. This Desulforudis audaxviator (strain MP104C) protein is D-aminoacyl-tRNA deacylase.